We begin with the raw amino-acid sequence, 346 residues long: MIKDNDNSKVALITGTSSNLGINIAYRLLEQLPSSTNVTLIVTSRTLPKVKEVITNINQYSKTKLNRTGQLEFDYLLVDFTDMVSVLSAYYDLNKKFKKIDYLFVNAAQGVYSGIDWVAATKEICRNPMEGVTNPTYKTQRVGVKSNDNMGLVFQANVFGPYYLIHKIKHLLQKGGRIIWISSLMSNPKYLSFNDLQLLKSPESYEGSKRLVDLMHFGTFKQLQSEYGIEQYLVQPGIFTSFSFFKFLNVFTYYSMLMLFYLARLFGSPSHNISGFIAANAPVTCALGNESQSVKVCSVSNRTGKEYLSYQEVDTTGSADISAYLEKLCHEWDLTLKDQIVNTRQP.

NADP(+) is bound by residues L20, T43, and K49. Active-site proton donor residues include S182 and Y205. Residues Y205, K209, and S241 each contribute to the NADP(+) site. The Lowers pKa of active site Tyr role is filled by K209.

Belongs to the short-chain dehydrogenases/reductases (SDR) family. ERG27 subfamily.

The enzyme catalyses a 3beta-hydroxysteroid + NADP(+) = a 3-oxosteroid + NADPH + H(+). It participates in steroid biosynthesis; zymosterol biosynthesis; zymosterol from lanosterol: step 5/6. In terms of biological role, responsible for the reduction of the keto group on the C-3 of sterols. The polypeptide is 3-keto-steroid reductase (ERG27) (Debaryomyces hansenii (strain ATCC 36239 / CBS 767 / BCRC 21394 / JCM 1990 / NBRC 0083 / IGC 2968) (Yeast)).